The sequence spans 31 residues: MSDVIIPFLTSAVTAFIVAYLLDRWYIKRRR.

In Bacillus subtilis (Bacteriophage SP01), this protein is Putative gene 37 protein (37).